The chain runs to 294 residues: Cyclin-G1 (294 aa).

This sequence belongs to the cyclin family. Cyclin G subfamily. Binds to B' regulatory B subunits of protein phosphatase A (PP2A) following induction by p53 (in vitro). Highest levels in kidney, heart and skeletal muscle.

It localises to the nucleus. Functionally, may play a role in growth regulation. Is associated with G2/M phase arrest in response to DNA damage. May be an intermediate by which p53 mediates its role as an inhibitor of cellular proliferation. This Mus musculus (Mouse) protein is Cyclin-G1 (Ccng1).